Reading from the N-terminus, the 356-residue chain is Histidinol-phosphate aminotransferase (356 aa).

Lys-214 carries the post-translational modification N6-(pyridoxal phosphate)lysine.

This sequence belongs to the class-II pyridoxal-phosphate-dependent aminotransferase family. Histidinol-phosphate aminotransferase subfamily. In terms of assembly, homodimer. Requires pyridoxal 5'-phosphate as cofactor.

It carries out the reaction L-histidinol phosphate + 2-oxoglutarate = 3-(imidazol-4-yl)-2-oxopropyl phosphate + L-glutamate. It functions in the pathway amino-acid biosynthesis; L-histidine biosynthesis; L-histidine from 5-phospho-alpha-D-ribose 1-diphosphate: step 7/9. This Shigella flexneri serotype 5b (strain 8401) protein is Histidinol-phosphate aminotransferase.